A 394-amino-acid polypeptide reads, in one-letter code: Argininosuccinate synthase (394 aa).

ATP contacts are provided by residues 7-15 (AYSGGLDTS) and alanine 34. The L-citrulline site is built by tyrosine 85 and serine 90. Residue glycine 115 participates in ATP binding. Residues threonine 117, asparagine 121, and aspartate 122 each contribute to the L-aspartate site. Asparagine 121 provides a ligand contact to L-citrulline. Positions 125, 176, 185, 261, and 273 each coordinate L-citrulline.

It belongs to the argininosuccinate synthase family. Type 1 subfamily. Homotetramer.

Its subcellular location is the cytoplasm. The enzyme catalyses L-citrulline + L-aspartate + ATP = 2-(N(omega)-L-arginino)succinate + AMP + diphosphate + H(+). It participates in amino-acid biosynthesis; L-arginine biosynthesis; L-arginine from L-ornithine and carbamoyl phosphate: step 2/3. This is Argininosuccinate synthase from Ehrlichia ruminantium (strain Gardel).